Consider the following 172-residue polypeptide: Crossover junction endodeoxyribonuclease RuvC (172 aa).

Catalysis depends on residues D7, E68, and D141. Mg(2+) contacts are provided by D7, E68, and D141.

Belongs to the RuvC family. In terms of assembly, homodimer which binds Holliday junction (HJ) DNA. The HJ becomes 2-fold symmetrical on binding to RuvC with unstacked arms; it has a different conformation from HJ DNA in complex with RuvA. In the full resolvosome a probable DNA-RuvA(4)-RuvB(12)-RuvC(2) complex forms which resolves the HJ. Requires Mg(2+) as cofactor.

Its subcellular location is the cytoplasm. The enzyme catalyses Endonucleolytic cleavage at a junction such as a reciprocal single-stranded crossover between two homologous DNA duplexes (Holliday junction).. Functionally, the RuvA-RuvB-RuvC complex processes Holliday junction (HJ) DNA during genetic recombination and DNA repair. Endonuclease that resolves HJ intermediates. Cleaves cruciform DNA by making single-stranded nicks across the HJ at symmetrical positions within the homologous arms, yielding a 5'-phosphate and a 3'-hydroxyl group; requires a central core of homology in the junction. The consensus cleavage sequence is 5'-(A/T)TT(C/G)-3'. Cleavage occurs on the 3'-side of the TT dinucleotide at the point of strand exchange. HJ branch migration catalyzed by RuvA-RuvB allows RuvC to scan DNA until it finds its consensus sequence, where it cleaves and resolves the cruciform DNA. The polypeptide is Crossover junction endodeoxyribonuclease RuvC (Frankia casuarinae (strain DSM 45818 / CECT 9043 / HFP020203 / CcI3)).